Reading from the N-terminus, the 905-residue chain is Stonin-2 (905 aa).

Disordered regions lie at residues 1 to 121, 178 to 205, and 244 to 263; these read MTTL…HQET, EQTS…VEME, and LPPV…SVIP. Residues 40–50 are compositionally biased toward low complexity; the sequence is SSSPDQSESSS. A compositionally biased stretch (basic and acidic residues) spans 60-73; it reads SQDHSHSEQDDSSE. Over residues 85 to 94 the composition is skewed to pro residues; that stretch reads PGSPEQPPPD. Positions 178–196 are enriched in polar residues; it reads EQTSGQASGADSTDNSSSL. The span at 244 to 256 shows a compositional bias: pro residues; the sequence is LPPVTSPLKPNTP. Thr255 carries the phosphothreonine modification. Ser281, Ser287, and Ser302 each carry phosphoserine. 2 short sequence motifs (NPF) span residues 313–315 and 329–331; these read NPF. An SHD domain is found at 427–560; that stretch reads GWPMMLRIPE…DLPVLSMDLS (134 aa). Residues 568 to 878 form the MHD domain; the sequence is EEEITVDVRD…SYQVALGSIW (311 aa). Residue Ser762 is modified to Phosphoserine.

This sequence belongs to the Stoned B family. Interacts with the second C2 domain of synaptotagmins SYT1 and SYT2. Interacts with EPS15, EPS15R and ITSN1. Interacts indirectly with the AP-2 adapter complex. Interacts with TOR1A and COPS4; the interaction controls STON2 protein stability. In terms of processing, phosphorylated in vitro by PKD. Neddylated; deneddylated via its interaction with the COP9 signalosome (CSN) complex through TOR1A and COPS4. Post-translationally, ubiquitinated; leading to its degradation. As to expression, ubiquitous.

It is found in the cytoplasm. Its subcellular location is the membrane. It localises to the synapse. The protein resides in the synaptosome. Adapter protein involved in endocytic machinery. Involved in the synaptic vesicle recycling. May facilitate clathrin-coated vesicle uncoating. This is Stonin-2 (STON2) from Homo sapiens (Human).